The chain runs to 302 residues: Putative 2-dehydro-3-deoxy-D-gluconate aldolase YagE (302 aa).

Active-site charge relay system residues include serine 49 and tyrosine 112. Tyrosine 138 acts as the Proton donor in catalysis. Residue lysine 167 is the Schiff-base intermediate with substrate of the active site.

It belongs to the DapA family. As to quaternary structure, a dimer of dimers.

The protein localises to the cytoplasm. The enzyme catalyses 2-dehydro-3-deoxy-D-gluconate = D-glyceraldehyde + pyruvate. It carries out the reaction 2-dehydro-3-deoxy-D-arabinonate = glycolaldehyde + pyruvate. In terms of biological role, catalyzes the formation of 2-keto-3-deoxy-gluconate (KDG) from pyruvate and glyceraldehyde. May also function as a 2-dehydro-3-deoxy-D-pentonate aldolase. Overexpression leads to increased growth (over 2 hours) in the presence of the antibiotics norfloxacin, ampicillin and streptomycin. The protein is Putative 2-dehydro-3-deoxy-D-gluconate aldolase YagE (yagE) of Escherichia coli (strain K12).